The sequence spans 152 residues: Succinate dehydrogenase [ubiquinone] cytochrome b small subunit, mitochondrial (152 aa).

The transit peptide at M1 to S21 directs the protein to the mitochondrion. The Mitochondrial matrix segment spans residues L22–S56. The chain crosses the membrane as a helical span at residues M57–L78. The Mitochondrial intermembrane portion of the chain corresponds to Y79–A83. A helical transmembrane segment spans residues M84–V104. A heme b-binding site is contributed by H95. Over T105–K113 the chain is Mitochondrial matrix. Y107 lines the a ubiquinone pocket. Residues I114–F135 form a helical membrane-spanning segment. Residues N136 to L152 lie on the Mitochondrial intermembrane side of the membrane.

Belongs to the CybS family. In terms of assembly, component of complex II composed of four subunits: the flavoprotein (FP) SDHA, iron-sulfur protein (IP) SDHB, and a cytochrome b560 composed of SDHC and SDHD.

It localises to the mitochondrion inner membrane. It functions in the pathway carbohydrate metabolism; tricarboxylic acid cycle. Functionally, membrane-anchoring subunit of succinate dehydrogenase (SDH) that is involved in complex II of the mitochondrial electron transport chain and is responsible for transferring electrons from succinate to ubiquinone (coenzyme Q). SDH also oxidizes malate to the non-canonical enol form of oxaloacetate, enol-oxaloacetate. Enol-oxaloacetate, which is a potent inhibitor of the succinate dehydrogenase activity, is further isomerized into keto-oxaloacetate. This Xenopus tropicalis (Western clawed frog) protein is Succinate dehydrogenase [ubiquinone] cytochrome b small subunit, mitochondrial (sdhd).